We begin with the raw amino-acid sequence, 260 residues long: Myb transcription factor 42 (260 aa).

HTH myb-type domains are found at residues 9–61 (KAHT…INYL) and 62–116 (RPDL…RRKL). DNA-binding regions (H-T-H motif) lie at residues 37 to 61 (WRSL…INYL) and 89 to 112 (WSLI…NTHI).

Mainly expressed in the aerial parts and, to a lower extent, in roots.

It localises to the nucleus. Transcription factor that negatively regulates the expression of caffeic acid O-methyl-transferase genes (COMTs) and of other genes involved in the biosynthesis of lignin, thus preventing lignification. This Zea mays (Maize) protein is Myb transcription factor 42.